A 134-amino-acid polypeptide reads, in one-letter code: Small ribosomal subunit protein uS11 (134 aa).

It belongs to the universal ribosomal protein uS11 family. As to quaternary structure, part of the 30S ribosomal subunit. Interacts with proteins S7 and S18. Binds to IF-3.

Located on the platform of the 30S subunit, it bridges several disparate RNA helices of the 16S rRNA. Forms part of the Shine-Dalgarno cleft in the 70S ribosome. The chain is Small ribosomal subunit protein uS11 from Polaromonas naphthalenivorans (strain CJ2).